The primary structure comprises 233 residues: Gamma-glutamyl-hercynylcysteine sulfoxide hydrolase (233 aa).

C2 functions as the Nucleophile in the catalytic mechanism. A Glutamine amidotransferase type-2 domain is found at 2–233; it reads CRHLGWLGAQ…TALDRAKGPR (232 aa).

The enzyme catalyses gamma-L-glutamyl-hercynylcysteine S-oxide + H2O = S-(hercyn-2-yl)-L-cysteine S-oxide + L-glutamate. It functions in the pathway amino-acid biosynthesis; ergothioneine biosynthesis. In terms of biological role, catalyzes the hydrolysis of the gamma-glutamyl amide bond of hercynyl-gamma-L-glutamyl-L-cysteine sulfoxide to produce hercynylcysteine sulfoxide, a step in the biosynthesis pathway of ergothioneine. Ergothioneine is an antioxidant that protects mycobacteria from oxidative stress. This is Gamma-glutamyl-hercynylcysteine sulfoxide hydrolase (egtC) from Mycobacterium tuberculosis (strain ATCC 25618 / H37Rv).